A 320-amino-acid chain; its full sequence is Putative HTH-type transcriptional regulatory protein VNG_2112C (320 aa).

The region spanning 132-189 is the HTH cro/C1-type domain; that stretch reads LADRREDERLSLGQLASELGVSRRTVSKYEDGMNASIEVAMRLEDLFGGELTAPVDVM. Residues 143 to 162 constitute a DNA-binding region (H-T-H motif); the sequence is LGQLASELGVSRRTVSKYED.

The sequence is that of Putative HTH-type transcriptional regulatory protein VNG_2112C from Halobacterium salinarum (strain ATCC 700922 / JCM 11081 / NRC-1) (Halobacterium halobium).